Consider the following 325-residue polypeptide: Tryptophan--tRNA ligase (325 aa).

ATP contacts are provided by residues 9 to 11 and 17 to 18; these read QPS and GN. Positions 10-18 match the 'HIGH' region motif; the sequence is PSGILHIGN. Position 132 (Asp132) interacts with L-tryptophan. ATP is bound by residues 144–146, Val184, and 191–195; these read GKD and KMSKS. Positions 191-195 match the 'KMSKS' region motif; sequence KMSKS.

It belongs to the class-I aminoacyl-tRNA synthetase family. In terms of assembly, homodimer.

It localises to the cytoplasm. The catalysed reaction is tRNA(Trp) + L-tryptophan + ATP = L-tryptophyl-tRNA(Trp) + AMP + diphosphate + H(+). Its function is as follows. Catalyzes the attachment of tryptophan to tRNA(Trp). The sequence is that of Tryptophan--tRNA ligase from Fusobacterium nucleatum subsp. nucleatum (strain ATCC 25586 / DSM 15643 / BCRC 10681 / CIP 101130 / JCM 8532 / KCTC 2640 / LMG 13131 / VPI 4355).